The sequence spans 99 residues: MSQISRDEVAHLARLARLALTEDELDSFAGQLDAILTHVSQIQAVDVTGVEATDNPLKDVNVMRADQTAPCLTQEEALAEAPAAVDGRFAVPQILGDSE.

This sequence belongs to the GatC family. As to quaternary structure, heterotrimer of A, B and C subunits.

It catalyses the reaction L-glutamyl-tRNA(Gln) + L-glutamine + ATP + H2O = L-glutaminyl-tRNA(Gln) + L-glutamate + ADP + phosphate + H(+). It carries out the reaction L-aspartyl-tRNA(Asn) + L-glutamine + ATP + H2O = L-asparaginyl-tRNA(Asn) + L-glutamate + ADP + phosphate + 2 H(+). Allows the formation of correctly charged Asn-tRNA(Asn) or Gln-tRNA(Gln) through the transamidation of misacylated Asp-tRNA(Asn) or Glu-tRNA(Gln) in organisms which lack either or both of asparaginyl-tRNA or glutaminyl-tRNA synthetases. The reaction takes place in the presence of glutamine and ATP through an activated phospho-Asp-tRNA(Asn) or phospho-Glu-tRNA(Gln). This Mycobacterium marinum (strain ATCC BAA-535 / M) protein is Aspartyl/glutamyl-tRNA(Asn/Gln) amidotransferase subunit C.